We begin with the raw amino-acid sequence, 1214 residues long: Spliceosome-associated protein 130 A (1214 aa).

The segment at 817–848 (AGGVGENGNGNADQMENGADDEDKEDPLSDEQ) is disordered. A compositionally biased stretch (acidic residues) spans 834–845 (GADDEDKEDPLS).

The protein belongs to the RSE1 family. In terms of assembly, identified in the spliceosome C complex. Component of the U11/U12 snRNPs that are part of the U12-type spliceosome. Component of splicing factor SF3B complex. Expressed at low levels in roots, leaves, inflorescence and, to a lower extent, in siliques.

Its subcellular location is the nucleus. In terms of biological role, subunit of the splicing factor SF3B required for 'A' complex assembly formed by the stable binding of U2 snRNP to the branchpoint sequence (BPS) in pre-mRNA. Sequence independent binding of SF3A/SF3B complex upstream of the branch site is essential, it may anchor U2 snRNP to the pre-mRNA. May also be involved in the assembly of the 'E' complex. Also belongs to the minor U12-dependent spliceosome, which is involved in the splicing of rare class of nuclear pre-mRNA intron. Required for pollen and ovule development, especially during the transition from microspore to the bicellular stage in pollen development. Involved in the accumulation of QRT1 and QRT3. The chain is Spliceosome-associated protein 130 A from Arabidopsis thaliana (Mouse-ear cress).